The following is a 284-amino-acid chain: L-ribulose-5-phosphate 3-epimerase UlaE (284 aa).

This sequence belongs to the L-ribulose-5-phosphate 3-epimerase family.

It carries out the reaction L-ribulose 5-phosphate = L-xylulose 5-phosphate. It functions in the pathway cofactor degradation; L-ascorbate degradation; D-xylulose 5-phosphate from L-ascorbate: step 3/4. Its function is as follows. Catalyzes the isomerization of L-xylulose-5-phosphate to L-ribulose-5-phosphate. Is involved in the anaerobic L-ascorbate utilization. In Escherichia coli (strain 55989 / EAEC), this protein is L-ribulose-5-phosphate 3-epimerase UlaE.